We begin with the raw amino-acid sequence, 68 residues long: Conotoxin TsMMSK-021 (68 aa).

The signal sequence occupies residues 1–20 (MMSKLGVLLTICLLLFPLTA). Positions 21 to 52 (VRLDGDQHTDRPADRMQDIATEQHPLFDPVKR) are excised as a propeptide. 3 cysteine pairs are disulfide-bonded: cysteine 53–cysteine 66, cysteine 54–cysteine 62, and cysteine 58–cysteine 65. Proline 64 is subject to 4-hydroxyproline.

The protein belongs to the conotoxin M superfamily. Expressed by the venom duct.

The protein localises to the secreted. This chain is Conotoxin TsMMSK-021, found in Conus tessulatus (Tessellate cone).